Consider the following 261-residue polypeptide: 3beta-hydroxysteroid dehydrogenase 1 (261 aa).

NAD(+) is bound by residues 65–66 (DV), Asn-92, Tyr-158, and Lys-162. Tyr-158 acts as the Proton acceptor in catalysis.

It belongs to the short-chain dehydrogenases/reductases (SDR) family.

It carries out the reaction 3-oxo-5beta-cholan-24-oate + NADH + H(+) = isolithocholate + NAD(+). The enzyme catalyses 12alpha-hydroxy-3-oxo-5beta-cholan-24-oate + NADH + H(+) = isodeoxycholate + NAD(+). The catalysed reaction is 7alpha,12alpha-dihydroxy-3-oxo-5beta-cholan-24-oate + NADH + H(+) = isocholate + NAD(+). It catalyses the reaction 3-oxochenodeoxycholate + NADH + H(+) = isochenodeoxycholate + NAD(+). Functionally, involved in the modification of secondary bile acids into iso-bile acids (3beta-bile acids) via epimerization of the 3-OH group through a 3-oxo-intermediate. Catalyzes the reduction of 12-alpha-hydroxy-3-oxo-5-beta-cholan-24-oate (3-oxo-DCA) and 3-oxo-5-beta-cholan-24-oate (3-oxo-LCA) to yield isodeoxycholate (isoDCA) and isolithocholate (isoLCA), respectively. Is also able to catalyze the reduction of 3-dehydrocholate (3-oxo-CA or 7alpha,12alpha-dihydroxy-3-oxo-5beta-cholan-24-oate) and 7-alpha-hydroxy-3-oxo-5-beta-cholan-24-oate (3-oxo-CDCA), into isocholate (isoCA) and isochenodeoxycholate (isoCDCA), respectively. Prefers NADH to NADPH as cosubstrate. The conversion of the abundant bile acid deoxycholate (DCA) into isoDCA by the gut bacterium E.lenta favors the growth of the keystone commensal genus Bacteroides, since isoDCA is less cytotoxic than its parent compound, DCA; iso-bile acids have thus a potential role in modulating gut community composition. This Eggerthella lenta (strain ATCC 25559 / DSM 2243 / CCUG 17323 / JCM 9979 / KCTC 3265 / NCTC 11813 / VPI 0255 / 1899 B) (Eubacterium lentum) protein is 3beta-hydroxysteroid dehydrogenase 1.